A 151-amino-acid polypeptide reads, in one-letter code: Ribonuclease H (151 aa).

Residues 1–143 (MYKKIEIFTD…CDQLARLAAK (143 aa)) form the RNase H type-1 domain. Mg(2+) is bound by residues aspartate 10, glutamate 48, aspartate 70, and aspartate 135.

This sequence belongs to the RNase H family. In terms of assembly, monomer. Requires Mg(2+) as cofactor.

Its subcellular location is the cytoplasm. The enzyme catalyses Endonucleolytic cleavage to 5'-phosphomonoester.. Endonuclease that specifically degrades the RNA of RNA-DNA hybrids. In Blochmanniella pennsylvanica (strain BPEN), this protein is Ribonuclease H.